The primary structure comprises 426 residues: Glutamyl-tRNA reductase (426 aa).

Substrate is bound by residues 49–52, Ser109, 114–116, and Gln120; these read TCNR and EGQ. Cys50 (nucleophile) is an active-site residue. Residue 189–194 coordinates NADP(+); the sequence is GAGKMS.

This sequence belongs to the glutamyl-tRNA reductase family. Homodimer.

It catalyses the reaction (S)-4-amino-5-oxopentanoate + tRNA(Glu) + NADP(+) = L-glutamyl-tRNA(Glu) + NADPH + H(+). It functions in the pathway porphyrin-containing compound metabolism; protoporphyrin-IX biosynthesis; 5-aminolevulinate from L-glutamyl-tRNA(Glu): step 1/2. It participates in porphyrin-containing compound metabolism; chlorophyll biosynthesis. Catalyzes the NADPH-dependent reduction of glutamyl-tRNA(Glu) to glutamate 1-semialdehyde (GSA). This is Glutamyl-tRNA reductase from Thermosynechococcus vestitus (strain NIES-2133 / IAM M-273 / BP-1).